A 263-amino-acid polypeptide reads, in one-letter code: uncharacterized protein (263 aa).

Residues 12–247 (LETQNLAIGY…ENLAKIYRTS (236 aa)) form the ABC transporter domain. Position 44–51 (44–51 (GANGAGKS)) interacts with ATP.

Belongs to the ABC transporter superfamily.

This is an uncharacterized protein from Haemophilus influenzae (strain ATCC 51907 / DSM 11121 / KW20 / Rd).